The chain runs to 397 residues: Protein ROH1D (397 aa).

Residues 247-267 (LIVPVYTMTTVLLFVMWALVA) traverse the membrane as a helical segment.

Belongs to the ROH1 family. In terms of assembly, interacts with EXO70C2. Mostly expressed in mature pollen.

It is found in the membrane. The protein localises to the cytoplasm. The protein resides in the cytosol. Functionally, involved in the regulation of plant growth, and modulates pollen development to ensure male fertility. May also affect the composition of the inner seed coat mucilage layer. This is Protein ROH1D from Arabidopsis thaliana (Mouse-ear cress).